We begin with the raw amino-acid sequence, 716 residues long: Fatty acid oxidation complex subunit alpha (716 aa).

The enoyl-CoA hydratase/isomerase stretch occupies residues methionine 1 to alanine 189. Aspartate 296 lines the substrate pocket. A 3-hydroxyacyl-CoA dehydrogenase region spans residues lysine 311–alanine 716. NAD(+)-binding positions include methionine 324, aspartate 343, valine 400 to glutamate 402, lysine 407, and serine 429. Histidine 450 acts as the For 3-hydroxyacyl-CoA dehydrogenase activity in catalysis. Asparagine 453 lines the NAD(+) pocket. Substrate contacts are provided by asparagine 500 and tyrosine 660.

It in the N-terminal section; belongs to the enoyl-CoA hydratase/isomerase family. This sequence in the C-terminal section; belongs to the 3-hydroxyacyl-CoA dehydrogenase family. Heterotetramer of two alpha chains (FadB) and two beta chains (FadA).

It catalyses the reaction a (3S)-3-hydroxyacyl-CoA + NAD(+) = a 3-oxoacyl-CoA + NADH + H(+). The enzyme catalyses a (3S)-3-hydroxyacyl-CoA = a (2E)-enoyl-CoA + H2O. It carries out the reaction a 4-saturated-(3S)-3-hydroxyacyl-CoA = a (3E)-enoyl-CoA + H2O. The catalysed reaction is (3S)-3-hydroxybutanoyl-CoA = (3R)-3-hydroxybutanoyl-CoA. It catalyses the reaction a (3Z)-enoyl-CoA = a 4-saturated (2E)-enoyl-CoA. The enzyme catalyses a (3E)-enoyl-CoA = a 4-saturated (2E)-enoyl-CoA. The protein operates within lipid metabolism; fatty acid beta-oxidation. Involved in the aerobic and anaerobic degradation of long-chain fatty acids via beta-oxidation cycle. Catalyzes the formation of 3-oxoacyl-CoA from enoyl-CoA via L-3-hydroxyacyl-CoA. It can also use D-3-hydroxyacyl-CoA and cis-3-enoyl-CoA as substrate. The polypeptide is Fatty acid oxidation complex subunit alpha (Shewanella baltica (strain OS185)).